The chain runs to 197 residues: MEHYLSLFIKSVFIENMALSFFLGMCTFLAVSKKVSTAFGLGVAVIFVLGLSVPANQLVYSLLKDGAIVEGVDLTFLKFITFIGVIAALVQILEMFLDKFVPALYNALGIYLPLITVNCAIFGAVSFMAQREYGFGESVVYGFGAGLGWMLAIVALAGITEKMKYSDAPKGLKGLGITFIAAGLMAMAFMSFSGIQL.

6 helical membrane passes run 11-31, 35-55, 76-96, 108-128, 139-159, and 175-195; these read SVFIENMALSFFLGMCTFLAV, VSTAFGLGVAVIFVLGLSVPA, FLKFITFIGVIAALVQILEMF, LGIYLPLITVNCAIFGAVSFM, VVYGFGAGLGWMLAIVALAGI, and LGITFIAAGLMAMAFMSFSGI.

Belongs to the NqrDE/RnfAE family. As to quaternary structure, composed of six subunits; NqrA, NqrB, NqrC, NqrD, NqrE and NqrF.

It localises to the cell inner membrane. The enzyme catalyses a ubiquinone + n Na(+)(in) + NADH + H(+) = a ubiquinol + n Na(+)(out) + NAD(+). In terms of biological role, NQR complex catalyzes the reduction of ubiquinone-1 to ubiquinol by two successive reactions, coupled with the transport of Na(+) ions from the cytoplasm to the periplasm. NqrA to NqrE are probably involved in the second step, the conversion of ubisemiquinone to ubiquinol. The protein is Na(+)-translocating NADH-quinone reductase subunit E of Neisseria meningitidis serogroup A / serotype 4A (strain DSM 15465 / Z2491).